The sequence spans 371 residues: uncharacterized protein (371 aa).

Histidine 76 contributes to the Zn(2+) binding site. Residue aspartate 78 is part of the active site. Aspartate 106 serves as a coordination point for Zn(2+). Residue glutamate 139 is the Proton acceptor of the active site. The Zn(2+) site is built by glutamate 140, aspartate 163, and histidine 344.

Belongs to the peptidase M20A family. Zn(2+) serves as cofactor.

Could be a peptidase. This is an uncharacterized protein from Bacillus subtilis (strain 168).